The following is a 264-amino-acid chain: 3-methyl-2-oxobutanoate hydroxymethyltransferase (264 aa).

Mg(2+) is bound by residues aspartate 45 and aspartate 84. Residues 45–46 (DS), aspartate 84, and lysine 112 each bind 3-methyl-2-oxobutanoate. Glutamate 114 serves as a coordination point for Mg(2+). Glutamate 181 serves as the catalytic Proton acceptor.

The protein belongs to the PanB family. Homodecamer; pentamer of dimers. The cofactor is Mg(2+).

The protein resides in the cytoplasm. It carries out the reaction 3-methyl-2-oxobutanoate + (6R)-5,10-methylene-5,6,7,8-tetrahydrofolate + H2O = 2-dehydropantoate + (6S)-5,6,7,8-tetrahydrofolate. Its pathway is cofactor biosynthesis; (R)-pantothenate biosynthesis; (R)-pantoate from 3-methyl-2-oxobutanoate: step 1/2. Functionally, catalyzes the reversible reaction in which hydroxymethyl group from 5,10-methylenetetrahydrofolate is transferred onto alpha-ketoisovalerate to form ketopantoate. The polypeptide is 3-methyl-2-oxobutanoate hydroxymethyltransferase (Edwardsiella ictaluri (strain 93-146)).